A 58-amino-acid polypeptide reads, in one-letter code: Isocitrate lyase (58 aa).

Belongs to the isocitrate lyase/PEP mutase superfamily. Isocitrate lyase family. In terms of assembly, homotetramer. It depends on Mg(2+) as a cofactor.

It is found in the glyoxysome. The enzyme catalyses D-threo-isocitrate = glyoxylate + succinate. The protein operates within carbohydrate metabolism; glyoxylate cycle; (S)-malate from isocitrate: step 1/2. In terms of biological role, involved in storage lipid mobilization during the growth of higher plant seedling. The protein is Isocitrate lyase of Helianthus annuus (Common sunflower).